The chain runs to 506 residues: Maturase K (506 aa).

Belongs to the intron maturase 2 family. MatK subfamily.

It is found in the plastid. The protein resides in the chloroplast. Functionally, usually encoded in the trnK tRNA gene intron. Probably assists in splicing its own and other chloroplast group II introns. In Austrosteenisia blackii (Blood vine), this protein is Maturase K.